The following is a 146-amino-acid chain: Interleukin-13 (146 aa).

The first 24 residues, 1 to 24, serve as a signal peptide directing secretion; sequence MHPLLNPLLLALGLMALLLTTVIA. N-linked (GlcNAc...) asparagine glycans are attached at residues Asn-52, Asn-63, Asn-71, and Asn-86. Cystine bridges form between Cys-62–Cys-90 and Cys-78–Cys-104.

This sequence belongs to the IL-4/IL-13 family. In terms of assembly, interacts with IL13RA2.

The protein localises to the secreted. Functionally, cytokine that plays important roles in allergic inflammation and immune response to parasite infection. Synergizes with IL2 in regulating interferon-gamma synthesis. Stimulates B-cell proliferation, and activation of eosinophils, basophils, and mast cells. Plays an important role in controlling IL33 activity by modulating the production of transmembrane and soluble forms of interleukin-1 receptor-like 1/IL1RL1. Displays the capacity to antagonize Th1-driven proinflammatory immune response and downregulates synthesis of many proinflammatory cytokines including IL1, IL6, IL10, IL12 and TNF-alpha through a mechanism that partially involves suppression of NF-kappa-B. Also functions on nonhematopoietic cells, including endothelial cells where it induces vascular cell adhesion protein 1/VCAM1, which is important in the recruitment of eosinophils. Exerts its biological effects through its receptors which comprises the IL4R chain and the IL13RA1 chain, to activate JAK1 and TYK2, leading to the activation of STAT6. Aside from IL13RA1, another receptor IL13RA2 acts as a high affinity decoy for IL13 and mediates internalization and depletion of extracellular IL13. This Homo sapiens (Human) protein is Interleukin-13 (IL13).